A 62-amino-acid chain; its full sequence is Photosystem II reaction center protein Z (62 aa).

Transmembrane regions (helical) follow at residues 8–28 (AVFALIVTSSILLISVPVVFA) and 41–61 (FSGTSLWIGLVFLVGILNSLI).

This sequence belongs to the PsbZ family. As to quaternary structure, PSII is composed of 1 copy each of membrane proteins PsbA, PsbB, PsbC, PsbD, PsbE, PsbF, PsbH, PsbI, PsbJ, PsbK, PsbL, PsbM, PsbT, PsbY, PsbZ, Psb30/Ycf12, at least 3 peripheral proteins of the oxygen-evolving complex and a large number of cofactors. It forms dimeric complexes.

The protein resides in the plastid. It is found in the chloroplast thylakoid membrane. Its function is as follows. May control the interaction of photosystem II (PSII) cores with the light-harvesting antenna, regulates electron flow through the 2 photosystem reaction centers. PSII is a light-driven water plastoquinone oxidoreductase, using light energy to abstract electrons from H(2)O, generating a proton gradient subsequently used for ATP formation. The protein is Photosystem II reaction center protein Z of Cucumis sativus (Cucumber).